Here is a 329-residue protein sequence, read N- to C-terminus: Serpentine receptor class alpha-3 (329 aa).

The next 7 membrane-spanning stretches (helical) occupy residues 25–45 (LIYF…LKVI), 57–77 (ILLY…GITI), 104–124 (YLEM…GLLF), 144–164 (GIIT…IIIW), 187–207 (TMFF…SLLI), 238–258 (ICFL…GVFL), and 273–293 (FWVV…ILLI).

It belongs to the nematode receptor-like protein sra family.

The protein resides in the membrane. The sequence is that of Serpentine receptor class alpha-3 (sra-3) from Caenorhabditis elegans.